A 347-amino-acid chain; its full sequence is D-fructose 1,6-bisphosphatase class 2/sedoheptulose 1,7-bisphosphatase (347 aa).

Mn(2+) is bound by residues aspartate 33, glutamate 57, aspartate 97, and glutamate 100. Substrate-binding positions include 100–102 (EGT), tyrosine 131, 176–178 (RDR), and 198–200 (DGD). Residue glutamate 225 participates in Mn(2+) binding.

It belongs to the FBPase class 2 family. As to quaternary structure, homotetramer. Requires Mn(2+) as cofactor.

The enzyme catalyses beta-D-fructose 1,6-bisphosphate + H2O = beta-D-fructose 6-phosphate + phosphate. The catalysed reaction is D-sedoheptulose 1,7-bisphosphate + H2O = D-sedoheptulose 7-phosphate + phosphate. It participates in carbohydrate biosynthesis; Calvin cycle. In terms of biological role, catalyzes the hydrolysis of fructose 1,6-bisphosphate (Fru 1,6-P2) and sedoheptulose 1,7-bisphosphate (Sed 1,7-P2) to fructose 6-phosphate and sedoheptulose 7-phosphate, respectively. The polypeptide is D-fructose 1,6-bisphosphatase class 2/sedoheptulose 1,7-bisphosphatase (Thermosynechococcus vestitus (strain NIES-2133 / IAM M-273 / BP-1)).